We begin with the raw amino-acid sequence, 293 residues long: tRNA pseudouridine synthase B (293 aa).

Residue Asp39 is the Nucleophile of the active site.

It belongs to the pseudouridine synthase TruB family. Type 1 subfamily.

It catalyses the reaction uridine(55) in tRNA = pseudouridine(55) in tRNA. Its function is as follows. Responsible for synthesis of pseudouridine from uracil-55 in the psi GC loop of transfer RNAs. The sequence is that of tRNA pseudouridine synthase B from Rickettsia bellii (strain OSU 85-389).